The following is a 554-amino-acid chain: Membrane protein insertase YidC (554 aa).

The next 5 helical transmembrane spans lie at 7–24, 362–382, 436–456, 475–495, and 510–530; these read VLWV…DNWQ, VVGN…AVFF, LPVV…LASV, PFFI…SLNP, and PIAF…YYVV.

It belongs to the OXA1/ALB3/YidC family. Type 1 subfamily. Interacts with the Sec translocase complex via SecD. Specifically interacts with transmembrane segments of nascent integral membrane proteins during membrane integration.

It is found in the cell inner membrane. Its function is as follows. Required for the insertion and/or proper folding and/or complex formation of integral membrane proteins into the membrane. Involved in integration of membrane proteins that insert both dependently and independently of the Sec translocase complex, as well as at least some lipoproteins. Aids folding of multispanning membrane proteins. The polypeptide is Membrane protein insertase YidC (Burkholderia vietnamiensis (strain G4 / LMG 22486) (Burkholderia cepacia (strain R1808))).